A 1412-amino-acid chain; its full sequence is DNA-directed RNA polymerase subunit beta'' (1412 aa).

Zn(2+)-binding residues include Cys-220, Cys-294, Cys-301, and Cys-304.

The protein belongs to the RNA polymerase beta' chain family. RpoC2 subfamily. In plastids the minimal PEP RNA polymerase catalytic core is composed of four subunits: alpha, beta, beta', and beta''. When a (nuclear-encoded) sigma factor is associated with the core the holoenzyme is formed, which can initiate transcription. Requires Zn(2+) as cofactor.

The protein resides in the plastid. It localises to the chloroplast. It carries out the reaction RNA(n) + a ribonucleoside 5'-triphosphate = RNA(n+1) + diphosphate. Its function is as follows. DNA-dependent RNA polymerase catalyzes the transcription of DNA into RNA using the four ribonucleoside triphosphates as substrates. The chain is DNA-directed RNA polymerase subunit beta'' from Chara vulgaris (Common stonewort).